Reading from the N-terminus, the 269-residue chain is 4-hydroxy-tetrahydrodipicolinate reductase (269 aa).

NAD(+) is bound by residues 11-16 (GASGRM) and Glu37. NADP(+) is bound at residue Arg38. NAD(+) is bound by residues 101 to 103 (GTT) and 125 to 128 (AGNM). The active-site Proton donor/acceptor is His158. His159 is a binding site for (S)-2,3,4,5-tetrahydrodipicolinate. Lys162 serves as the catalytic Proton donor. 168-169 (GT) contacts (S)-2,3,4,5-tetrahydrodipicolinate.

It belongs to the DapB family.

The protein resides in the cytoplasm. The catalysed reaction is (S)-2,3,4,5-tetrahydrodipicolinate + NAD(+) + H2O = (2S,4S)-4-hydroxy-2,3,4,5-tetrahydrodipicolinate + NADH + H(+). The enzyme catalyses (S)-2,3,4,5-tetrahydrodipicolinate + NADP(+) + H2O = (2S,4S)-4-hydroxy-2,3,4,5-tetrahydrodipicolinate + NADPH + H(+). It participates in amino-acid biosynthesis; L-lysine biosynthesis via DAP pathway; (S)-tetrahydrodipicolinate from L-aspartate: step 4/4. Its function is as follows. Catalyzes the conversion of 4-hydroxy-tetrahydrodipicolinate (HTPA) to tetrahydrodipicolinate. The sequence is that of 4-hydroxy-tetrahydrodipicolinate reductase from Ruegeria pomeroyi (strain ATCC 700808 / DSM 15171 / DSS-3) (Silicibacter pomeroyi).